A 189-amino-acid chain; its full sequence is Peptidyl-tRNA hydrolase (189 aa).

Tyrosine 16 serves as a coordination point for tRNA. Histidine 21 serves as the catalytic Proton acceptor. TRNA-binding residues include phenylalanine 67, asparagine 69, and asparagine 115.

This sequence belongs to the PTH family. As to quaternary structure, monomer.

It localises to the cytoplasm. The enzyme catalyses an N-acyl-L-alpha-aminoacyl-tRNA + H2O = an N-acyl-L-amino acid + a tRNA + H(+). Functionally, hydrolyzes ribosome-free peptidyl-tRNAs (with 1 or more amino acids incorporated), which drop off the ribosome during protein synthesis, or as a result of ribosome stalling. Its function is as follows. Catalyzes the release of premature peptidyl moieties from peptidyl-tRNA molecules trapped in stalled 50S ribosomal subunits, and thus maintains levels of free tRNAs and 50S ribosomes. In Legionella pneumophila subsp. pneumophila (strain Philadelphia 1 / ATCC 33152 / DSM 7513), this protein is Peptidyl-tRNA hydrolase.